Reading from the N-terminus, the 293-residue chain is uncharacterized protein (293 aa).

Active-site charge relay system residues include Thr-43 and Tyr-105. Tyr-131 (proton donor) is an active-site residue. The active-site Schiff-base intermediate with substrate is Lys-159.

It belongs to the DapA family. Homotetramer.

Its subcellular location is the cytoplasm. This is an uncharacterized protein from Thermococcus onnurineus (strain NA1).